We begin with the raw amino-acid sequence, 131 residues long: MWNEFKKFAIRGNVIDLAVGVIIGGAFGKIVSSLVNDIIMPLVGLLLGGIDFSNLSWKVGKAVVKYGAFIQTVVDFLIIAFSIFLFVKLINKLYERVKKQEEMEETEPTLTKEEELLTEIRDLLKQQRETM.

A run of 3 helical transmembrane segments spans residues 8-28, 30-50, and 67-87; these read FAIR…GAFG, IVSS…LGGI, and GAFI…FLFV.

The protein belongs to the MscL family. In terms of assembly, homopentamer.

The protein resides in the cell membrane. Functionally, channel that opens in response to stretch forces in the membrane lipid bilayer. May participate in the regulation of osmotic pressure changes within the cell. This Geobacillus thermodenitrificans (strain NG80-2) protein is Large-conductance mechanosensitive channel.